We begin with the raw amino-acid sequence, 276 residues long: Rho-related protein racO (276 aa).

11–18 (GDGLIGKT) contributes to the GTP binding site. The Effector region motif lies at 34–42 (YSSFDSEYL). Residues 60–64 (ENDGF) and 124–127 (IKTD) contribute to the GTP site. The disordered stretch occupies residues 199–276 (FKNNNNNNNY…NKTTNKCKIS (78 aa)). Over residues 200 to 270 (KNNNNNNNYN…SYKNHNNKTT (71 aa)) the composition is skewed to low complexity. Cysteine 273 is modified (cysteine methyl ester). A lipid anchor (S-geranylgeranyl cysteine) is attached at cysteine 273. Residues 274–276 (KIS) constitute a propeptide, removed in mature form.

The protein belongs to the small GTPase superfamily. Rho family.

The protein resides in the cell membrane. This chain is Rho-related protein racO (racO), found in Dictyostelium discoideum (Social amoeba).